Reading from the N-terminus, the 65-residue chain is MRNLCFVFIFISLLAHGSTHGPDSCNHDRGLCRVGNCNPGEYLAKYCFEPVILCCKPLSPTPTKT.

The N-terminal stretch at 1–19 is a signal peptide; that stretch reads MRNLCFVFIFISLLAHGST. 3 disulfides stabilise this stretch: C25–C54, C32–C47, and C37–C55.

This sequence belongs to the beta-defensin family. In terms of tissue distribution, expressed in the large intestine, kidney liver, gall bladder, testis, ovary and male and female reproductive tracts. Expressed in the ovarian stroma and the theca and granulosa layers of the ovarian follicle.

It localises to the secreted. Its subcellular location is the cytoplasmic granule. Has bactericidal activity. The chain is Gallinacin-12 (GAL12) from Gallus gallus (Chicken).